The primary structure comprises 365 residues: tRNA dimethylallyltransferase (365 aa).

Residue 23-30 (APTASGKT) participates in ATP binding. 25-30 (TASGKT) is a substrate binding site. Interaction with substrate tRNA regions lie at residues 48-51 (DSAL), 172-176 (QRITR), and 256-261 (RCVGYR).

It belongs to the IPP transferase family. In terms of assembly, monomer. Requires Mg(2+) as cofactor.

It carries out the reaction adenosine(37) in tRNA + dimethylallyl diphosphate = N(6)-dimethylallyladenosine(37) in tRNA + diphosphate. In terms of biological role, catalyzes the transfer of a dimethylallyl group onto the adenine at position 37 in tRNAs that read codons beginning with uridine, leading to the formation of N6-(dimethylallyl)adenosine (i(6)A). In Psychrobacter sp. (strain PRwf-1), this protein is tRNA dimethylallyltransferase.